The sequence spans 331 residues: MWLWEDQGGLLGPFSFVLVLLLVVTRSPFNACVLTGSLYILLRFFSFEPVPSRRALQVLKPRDRVSAIAHRGGSHDAPENTLAAIRQAAKNGATGVELDIEFTSDGVPVLMHDNTVDRTTDGSGRLCDLTFEQVRKLNPAANHRLRNEFPDERIPTLKEAVTECLRHNLTIFFDVKGHADMASAALKNIYTEFPQLYNNSMVCSFLPEVIYKMRQTDQKVITALTHRPWSLSHTGDGKPRYSVFWKQSVFVVLDILLDWSMHNVLWYLCGISAFLMQKDFVSPDYLKKWSAKGIQVVSWTVNTFDEKNYYESHLGSSYITDSMLEDCAPHF.

At 1–3 the chain is on the cytoplasmic side; that stretch reads MWL. A helical membrane pass occupies residues 4–24; that stretch reads WEDQGGLLGPFSFVLVLLLVV. The Lumenal segment spans residues 25–248; it reads TRSPFNACVL…PRYSVFWKQS (224 aa). The GP-PDE domain maps to 65–331; sequence VSAIAHRGGS…SMLEDCAPHF (267 aa). Mg(2+) is bound by residues glutamate 97 and aspartate 99. Asparagine 168 carries an N-linked (GlcNAc...) asparagine glycan. Mg(2+) is bound at residue aspartate 174. A helical membrane pass occupies residues 249 to 269; that stretch reads VFVVLDILLDWSMHNVLWYLC. At 270–331 the chain is on the cytoplasmic side; the sequence is GISAFLMQKD…SMLEDCAPHF (62 aa).

This sequence belongs to the glycerophosphoryl diester phosphodiesterase family. Interacts with PRAF2. Interacts with RGS16. The cofactor is Mg(2+). N-glycosylated. Widely expressed. Highly expressed in the brain and spinal cord, followed by kidney, liver, and testis. In contrast, little or no expression is detected in the heart or spleen.

It is found in the cell membrane. The protein resides in the cytoplasmic vesicle membrane. The enzyme catalyses sn-glycero-3-phospho-1D-myo-inositol + H2O = myo-inositol + sn-glycerol 3-phosphate + H(+). It carries out the reaction 1-O-(1Z-octadecenyl)-sn-glycero-3-phospho-(N-5Z,8Z,11Z,14Z-eicosatetraenoyl)-ethanolamine + H2O = 1-O-(1Z-octadecenyl)-sn-glycero-3-phosphate + N-(5Z,8Z,11Z,14Z-eicosatetraenoyl)-ethanolamine + H(+). The catalysed reaction is 1-O-(1Z-octadecenyl)-sn-glycero-3-phospho-(N-9Z-octadecenoyl)-ethanolamine + H2O = 1-O-(1Z-octadecenyl)-sn-glycero-3-phosphate + N-(9Z-octadecenoyl) ethanolamine + H(+). It catalyses the reaction 1-O-(1Z-octadecenyl)-sn-glycero-3-phospho-N-hexadecanoyl-ethanolamine + H2O = 1-O-(1Z-octadecenyl)-sn-glycero-3-phosphate + N-hexadecanoylethanolamine + H(+). The enzyme catalyses N-(4Z,7Z,10Z,13Z,16Z,19Z)-docosahexaenoyl-sn-glycero-3-phosphoethanolamine + H2O = N-(4Z,7Z,10Z,13Z,16Z,19Z)-docosahexaenoyl ethanolamine + sn-glycerol 3-phosphate + H(+). It carries out the reaction N-eicosanoyl-sn-glycero-3-phosphoethanolamine + H2O = N-eicosanoyl ethanolamine + sn-glycerol 3-phosphate + H(+). The catalysed reaction is N-hexadecanoyl-sn-glycero-3-phosphoethanolamine + H2O = N-hexadecanoylethanolamine + sn-glycerol 3-phosphate + H(+). It catalyses the reaction N-(9Z-octadecenoyl)-sn-glycero-3-phosphoethanolamine + H2O = N-(9Z-octadecenoyl) ethanolamine + sn-glycerol 3-phosphate + H(+). The enzyme catalyses N-(5Z,8Z,11Z,14Z-eicosatetraenoyl)-sn-glycero-3-phosphoethanolamine + H2O = N-(5Z,8Z,11Z,14Z-eicosatetraenoyl)-ethanolamine + sn-glycerol 3-phosphate + H(+). With respect to regulation, inhibited by EDTA, calcium chloride, and zinc chloride. Enhanced by magnesium chloride. Glycerophosphodiester phosphodiesterase activity can be modulated by G-protein signaling pathways. Hydrolyzes the phosphodiester bond of glycerophosphodiesters such as glycerophosphoinositol (GroPIns) and glycerophosphoethanolamine (GroPEth), to yield a glycerol phosphate and an alcohol. Hydrolyzes glycerophospho-N-acylethanolamines to N-acylethanolamines in the brain and participates in bioactive N-acylethanolamine biosynthesis such as anandamide (an endocannabinoid), N-palmitoylethanolamine (an anti-inflammatory), and N-oleoylethanolamine (an anorexic). In addition, has a lysophospholipase D activity by hydrolyzing N-acyl-lysoplasmenylethanolamine (N-acyl-lysoPlsEt) to N-acylethanolamine. However lysophospholipase D activity is lower than glycerophosphodiester phosphodiesterase activity. Has little or no activity towards glycerophosphocholine. This chain is Glycerophosphodiester phosphodiesterase 1, found in Mus musculus (Mouse).